We begin with the raw amino-acid sequence, 620 residues long: 1-deoxy-D-xylulose-5-phosphate synthase (620 aa).

Thiamine diphosphate contacts are provided by residues His-80 and 121–123; that span reads GHS. Asp-152 provides a ligand contact to Mg(2+). Residues 153-154, Asn-181, Tyr-288, and Glu-370 contribute to the thiamine diphosphate site; that span reads GA. Asn-181 lines the Mg(2+) pocket.

The protein belongs to the transketolase family. DXPS subfamily. In terms of assembly, homodimer. Mg(2+) is required as a cofactor. The cofactor is thiamine diphosphate.

The catalysed reaction is D-glyceraldehyde 3-phosphate + pyruvate + H(+) = 1-deoxy-D-xylulose 5-phosphate + CO2. Its pathway is metabolic intermediate biosynthesis; 1-deoxy-D-xylulose 5-phosphate biosynthesis; 1-deoxy-D-xylulose 5-phosphate from D-glyceraldehyde 3-phosphate and pyruvate: step 1/1. In terms of biological role, catalyzes the acyloin condensation reaction between C atoms 2 and 3 of pyruvate and glyceraldehyde 3-phosphate to yield 1-deoxy-D-xylulose-5-phosphate (DXP). The polypeptide is 1-deoxy-D-xylulose-5-phosphate synthase (Escherichia coli O7:K1 (strain IAI39 / ExPEC)).